A 616-amino-acid polypeptide reads, in one-letter code: Heme A synthase-mitochondrial ferredoxin fusion protein (616 aa).

Residues 1 to 45 constitute a mitochondrion transit peptide; that stretch reads MNISRSSGLMRQFLLQPLRKGCDISCLGRSSWRMSRSFSGSSVLN. Positions 45–465 are heme a synthase cox15-like; that stretch reads NEINLSRTKN…AALSLAQRLH (421 aa). The Mitochondrial matrix segment spans residues 46 to 97; the sequence is EINLSRTKNLFLNDCKFNKNSFEKFFARRLSNSVAPTPGGILQETEKIPSKK. The chain crosses the membrane as a helical span at residues 98–118; it reads VAFWLLGSSALVLAIVVVGGI. The Mitochondrial intermembrane portion of the chain corresponds to 119–182; that stretch reads TRLTESGLSI…NIFFWEWFHR (64 aa). H181 provides a ligand contact to heme o. A helical transmembrane segment spans residues 183-203; the sequence is VLGRGIGLTILLPSIYMIVTK. Over 204–212 the chain is Mitochondrial matrix; that stretch reads RASPWLSKR. A helical membrane pass occupies residues 213-233; sequence LIGLTGLVGLQGVIGWWMVKS. Residues 234 to 254 are Mitochondrial intermembrane-facing; that stretch reads GLSEELFSDGSHPRVSHYRLA. Residues 255–275 form a helical membrane-spanning segment; that stretch reads THLAAAVALYIGLVWTGHGIL. Residue H256 coordinates heme o. Over 276-311 the chain is Mitochondrial matrix; the sequence is QRHAFLKSMKSGSTSQLTSMVSSVQKMKGFRTSVNS. The helical transmembrane segment at 312-332 threads the bilayer; the sequence is FVGLVLITLLSGAFVAGLDAG. Residues 333-380 lie on the Mitochondrial intermembrane side of the membrane; that stretch reads MIYCTFPEMGEGRLAPSKSELFDQRFCRKDDKSDLIWRNMIDNPSLVQ. A helical transmembrane segment spans residues 381 to 401; sequence LEHRILAITTFVAACGLFIFS. Heme b is bound at residue H383. The Mitochondrial matrix portion of the chain corresponds to 402–417; it reads RAKRNILPKKIKTSIN. Residues 418–438 form a helical membrane-spanning segment; it reads VVTGVVTAQATLGIMTLIYVV. P439 is a topological domain (mitochondrial intermembrane). A helical membrane pass occupies residues 440 to 460; sequence VPLAALHQAGSLVTLTAALSL. H446 lines the heme b pocket. Residues 461 to 616 lie on the Mitochondrial matrix side of the membrane; that stretch reads AQRLHPEYAL…RNIRLERPKA (156 aa). The region spanning 502-606 is the 2Fe-2S ferredoxin-type domain; the sequence is FRPSFHSEIK…GIRVRIPAQT (105 aa). A mitochondrial ferredoxin yah1-like region spans residues 516-616; that stretch reads GTGIKVFFVT…RNIRLERPKA (101 aa). Positions 541, 547, 550, and 587 each coordinate [2Fe-2S] cluster.

The protein in the N-terminal section; belongs to the COX15/CtaA family. Type 2 subfamily. This sequence in the C-terminal section; belongs to the adrenodoxin/putidaredoxin family. Homodimer. The cofactor is heme b. Requires [2Fe-2S] cluster as cofactor. The etp1 preprotein is cleaved into 2 chains after imort into mitochondria. The N-terminal chain containing a heme A synthase cox15-like domain etp1(cd) is a subunit of the membrane-embedded cytochrome c oxidase complex and functions in the respiratory chain. The C-terminal chain containing a ferredoxin yah1-like domain etp1(fd) is released and serves in the matrix as electron transfer protein.

It localises to the mitochondrion inner membrane. Its subcellular location is the mitochondrion matrix. It carries out the reaction Fe(II)-heme o + 2 A + H2O = Fe(II)-heme a + 2 AH2. The protein operates within porphyrin-containing compound metabolism; heme A biosynthesis; heme A from heme O: step 1/1. Its function is as follows. Catalyzes the second reaction in the biosynthesis of heme A, a prosthetic group of mitochondrial cytochrome c oxidase (CcO). Heme A is synthesized from heme B by two sequential enzymatic reactions catalyzed by heme O synthase (HOS) and heme A synthase (HAS). HAS catalyzes the conversion of heme O to heme A by two successive hydroxylations of the methyl group at C8, in a reaction that involves matrix ferredoxin and ferredoxin reductase. The first hydroxylation forms heme I, the second hydroxylation results in an unstable dihydroxymethyl group, which spontaneously dehydrates, resulting in the formyl group of heme A. Iron-sulfur protein that transfers electrons in a wide variety of metabolic reactions. Involved in heme A biosynthesis and in iron-sulfur cluster assembly. Transfers electrons from adrenodoxin reductase arh1 to heme A synthase etp1(cd), a heme protein that catalyzes the conversion of heme O to heme A. Required for the de novo synthesis of Fe-S clusters on iron sulfur cluster assembly protein isu1. Interact in its reduced state with isu1 to productively deliver electrons for Fe-S cluster synthesis. Essential for coenzyme Q biosynthesis. May transfer the electrons required for the hydroxylation reaction performed by coq6. This is Heme A synthase-mitochondrial ferredoxin fusion protein from Schizosaccharomyces pombe (strain 972 / ATCC 24843) (Fission yeast).